The chain runs to 115 residues: Salivary anti-complement protein (115 aa).

The N-terminal stretch at 1–22 is a signal peptide; sequence MKFFYLIFSAIFFLADPALVKC. 3 disulfides stabilise this stretch: C26–C108, C41–C92, and C83–C101.

May form multimers. Salivary gland (at protein level).

The protein localises to the secreted. Functionally, salivary protein that inhibits the classical pathway of complement system activation in the host while having no inhibitory effect on the alternative or lectin pathways. Prevent cleavage of host C4 and consequently impairs the activation of factors downstream of C4b in the complement cascade. The chain is Salivary anti-complement protein from Lutzomyia longipalpis (Sand fly).